The chain runs to 535 residues: Keratin, type II cytoskeletal 79 (535 aa).

Polar residues-rich tracts occupy residues 1–12 (MRSSVSRQTYST) and 28–38 (QARTSFSSVTV). The interval 1-53 (MRSSVSRQTYSTKGAFSSSSASGGGGSQARTSFSSVTVSRNSGRGGGPRCGPS) is disordered. Residues 1-141 (MRSSVSRQTY…DPEIQRVRTE (141 aa)) form a head region. The span at 43–53 (GRGGGPRCGPS) shows a compositional bias: gly residues. The coil 1A stretch occupies residues 142 to 177 (EREQIKTLNNKFASFIDKVRFLEQQNKVLETKWALL). The region spanning 142–457 (EREQIKTLNN…KLLESEESRM (316 aa)) is the IF rod domain. The segment at 178-198 (QEQGQKSGVTRNNLEPLFEHF) is linker 1. The coil 1B stretch occupies residues 199-290 (INNLRGKLDN…HLYEEELSQV (92 aa)). The tract at residues 291–314 (QTHVSDTSVILSMDNNRNLDLDSI) is linker 12. A coil 2 region spans residues 315–453 (IAEVKAQYEQ…ATYRKLLESE (139 aa)). The tract at residues 454–535 (ESRMSGECPS…TTVKTSSRRY (82 aa)) is tail.

The protein belongs to the intermediate filament family. In terms of assembly, heterotetramer of two type I and two type II keratins.

The sequence is that of Keratin, type II cytoskeletal 79 (KRT79) from Bos taurus (Bovine).